Consider the following 344-residue polypeptide: Ferrochelatase (344 aa).

Fe cation-binding residues include His214 and Glu295.

It belongs to the ferrochelatase family.

It localises to the cytoplasm. It catalyses the reaction heme b + 2 H(+) = protoporphyrin IX + Fe(2+). It functions in the pathway porphyrin-containing compound metabolism; protoheme biosynthesis; protoheme from protoporphyrin-IX: step 1/1. Catalyzes the ferrous insertion into protoporphyrin IX. This Rhizobium johnstonii (strain DSM 114642 / LMG 32736 / 3841) (Rhizobium leguminosarum bv. viciae) protein is Ferrochelatase.